Consider the following 46-residue polypeptide: Photosystem II reaction center protein K (46 aa).

A propeptide spanning residues 1-9 (MLILLNTFA) is cleaved from the precursor. Residues 25–45 (LPLIPLFFFLLVFVWQAAVGF) traverse the membrane as a helical segment.

Belongs to the PsbK family. As to quaternary structure, PSII is composed of 1 copy each of membrane proteins PsbA, PsbB, PsbC, PsbD, PsbE, PsbF, PsbH, PsbI, PsbJ, PsbK, PsbL, PsbM, PsbT, PsbX, PsbY, Psb30/Ycf12, peripheral proteins PsbO, CyanoQ (PsbQ), PsbU, PsbV and a large number of cofactors. It forms dimeric complexes.

Its subcellular location is the cellular thylakoid membrane. Its function is as follows. One of the components of the core complex of photosystem II (PSII). PSII is a light-driven water:plastoquinone oxidoreductase that uses light energy to abstract electrons from H(2)O, generating O(2) and a proton gradient subsequently used for ATP formation. It consists of a core antenna complex that captures photons, and an electron transfer chain that converts photonic excitation into a charge separation. This chain is Photosystem II reaction center protein K, found in Prochlorococcus marinus (strain MIT 9215).